We begin with the raw amino-acid sequence, 1531 residues long: Multidrug resistance-associated protein 1 (1531 aa).

Topologically, residues 1 to 33 (MALRGFCSADGSDPLWDWNVTWYTSNPDFTKCF) are extracellular. An N-linked (GlcNAc...) asparagine glycan is attached at Asn-19. Residues 34–54 (QNTVLVWVPCFYLWACFPFYF) traverse the membrane as a helical segment. Topologically, residues 55-74 (LYLSRHDRGYIQMTLLNKTK) are cytoplasmic. Residues 75-95 (TALGFLLWIVCWADLFYSFWE) traverse the membrane as a helical segment. At 96–100 (RSRGI) the chain is on the extracellular side. Residues 101–121 (FLAPVFLVSPTLLGITMLLAT) traverse the membrane as a helical segment. Topologically, residues 122–133 (FLIQLERRKGVQ) are cytoplasmic. The chain crosses the membrane as a helical span at residues 134-154 (SSGIMLTFWLVALLCALAILR). The Extracellular segment spans residues 155–172 (SKIMTALKEDVQVDLFRD). Residues 173 to 193 (MTFYVYFSLVLIQLVLSCFSD) traverse the membrane as a helical segment. The Cytoplasmic portion of the chain corresponds to 194–316 (RSPLFSETIH…KEWNPSLFKV (123 aa)). Residue Tyr-277 is modified to Phosphotyrosine. Ser-289 carries the phosphoserine modification. The helical transmembrane segment at 317-337 (LYKTFGPYFLMSFFFKAIHDL) threads the bilayer. Residues 325–608 (FLMSFFFKAI…LPMVISSIVQ (284 aa)) form the ABC transmembrane type-1 1 domain. Over 338 to 363 (MMFSGPEILKLLINFVNDTKAPDWQG) the chain is Extracellular. The helical transmembrane segment at 364-384 (YFYTALLFVAACLQTLVLHQY) threads the bilayer. Residues 385–440 (FHICFVSGMRIKTAVIGAVYRKALVITNAARKSSTVGEIVNLMSVDAQRFMDLATY) are Cytoplasmic-facing. The chain crosses the membrane as a helical span at residues 441-461 (INMIWSAPLQVILALYLLWRN). Over 462 to 464 (LGP) the chain is Extracellular. A helical transmembrane segment spans residues 465-485 (PILAGVAVMVLMVPVNAVMAM). Topologically, residues 486–547 (KTKTYQVAHM…VLKKSAYLAA (62 aa)) are cytoplasmic. Lys-503 carries the N6-succinyllysine modification. The helical transmembrane segment at 548–568 (VGTFTWVCTPFLVALCTFAVY) threads the bilayer. Topologically, residues 569–590 (VTIDKNNVLDAQKAFVSLALFN) are extracellular. The helical transmembrane segment at 591 to 611 (ILRFPLNILPMVISSIVQASV) threads the bilayer. The Cytoplasmic segment spans residues 612 to 967 (SLKRLRIFLS…VKLSVYWDYM (356 aa)). The region spanning 644–868 (ITVRNATFTW…DGAFAEFLRT (225 aa)) is the ABC transporter 1 domain. Residue 678-685 (GQVGCGKS) participates in ATP binding. The segment at 871-893 (SAEQEQDPEDNGVTGVSGPGKEA) is disordered. A phosphoserine mark is found at Ser-905, Ser-915, and Ser-930. A disordered region spans residues 917 to 938 (SSSYSGDVSRQHNSTAELQKDG). Over residues 922 to 933 (GDVSRQHNSTAE) the composition is skewed to polar residues. A helical membrane pass occupies residues 968–988 (KAIGLFISFLSIFLFICNHVA). The region spanning 975-1256 (SFLSIFLFIC…LVRMSSEMET (282 aa)) is the ABC transmembrane type-1 2 domain. At 989 to 1025 (ALASNYWLSLWTDDPIVNGTQEHTKVRLSVYGALGIS) the chain is on the extracellular side. Residue Asn-1006 is glycosylated (N-linked (GlcNAc...) asparagine). The helical transmembrane segment at 1026-1046 (QGIAVFGYSMAVSIGGILASR) threads the bilayer. The Cytoplasmic segment spans residues 1047 to 1089 (CLHVDLLHSILRSPMSFFERTPSGNLVNRFSKELDTVDSMIPE). The helical transmembrane segment at 1090-1110 (VIKMFMGSLFNVIGACIVILL) threads the bilayer. A topological domain (extracellular) is located at residue Ala-1111. Residues 1112 to 1132 (TPIAAIIIPPLGLIYFFVQRF) form a helical membrane-spanning segment. Residues 1133 to 1203 (YVASSRQLKR…VANRWLAVRL (71 aa)) lie on the Cytoplasmic side of the membrane. A helical transmembrane segment spans residues 1204 to 1224 (ECVGNCIVLFAALFAVISRHS). Topologically, residues 1225-1226 (LS) are extracellular. A helical transmembrane segment spans residues 1227 to 1247 (AGLVGLSVSYSLQVTTYLNWL). Residues 1248-1531 (VRMSSEMETN…YNMARDAGLV (284 aa)) are Cytoplasmic-facing. In terms of domain architecture, ABC transporter 2 spans 1293-1527 (VEFRNYCLRY…RGLFYNMARD (235 aa)). 1327-1334 (GRTGAGKS) is an ATP binding site.

It belongs to the ABC transporter superfamily. ABCC family. Conjugate transporter (TC 3.A.1.208) subfamily.

Its subcellular location is the cell membrane. The protein resides in the basolateral cell membrane. The enzyme catalyses ATP + H2O + xenobioticSide 1 = ADP + phosphate + xenobioticSide 2.. It carries out the reaction an S-substituted glutathione(in) + ATP + H2O = an S-substituted glutathione(out) + ADP + phosphate + H(+). The catalysed reaction is sphing-4-enine 1-phosphate(in) + ATP + H2O = sphing-4-enine 1-phosphate(out) + ADP + phosphate + H(+). It catalyses the reaction leukotriene C4(in) + ATP + H2O = leukotriene C4(out) + ADP + phosphate + H(+). The enzyme catalyses 17beta-estradiol 17-O-(beta-D-glucuronate)(in) + ATP + H2O = 17beta-estradiol 17-O-(beta-D-glucuronate)(out) + ADP + phosphate + H(+). It carries out the reaction daunorubicin(in) + ATP + H2O = daunorubicin(out) + ADP + phosphate + H(+). The catalysed reaction is vincristine(in) + ATP + H2O = vincristine(out) + ADP + phosphate + H(+). It catalyses the reaction 2',3'-cGAMP(in) + ATP + H2O = 2',3'-cGAMP(out) + ADP + phosphate + H(+). The enzyme catalyses S-[(2E,6E,10E)-geranylgeranyl]-L-glutathione(in) + ATP + H2O = S-[(2E,6E,10E)-geranylgeranyl]-L-glutathione(out) + ADP + phosphate + H(+). It carries out the reaction prostaglandin A2-S-(R)-glutathione(in) + ATP + H2O = prostaglandin A2-S-(R)-glutathione(out) + ADP + phosphate + H(+). The catalysed reaction is prostaglandin A2-S-(S)-glutathione(in) + ATP + H2O = prostaglandin A2-S-(S)-glutathione(out) + ADP + phosphate + H(+). Its activity is regulated as follows. MK 571 inhibits sphingosine 1-phosphate and leukotriene C4 export. Its function is as follows. Mediates export of organic anions and drugs from the cytoplasm. Mediates ATP-dependent transport of glutathione and glutathione conjugates, leukotriene C4, estradiol-17-beta-o-glucuronide, methotrexate, antiviral drugs and other xenobiotics. Confers resistance to anticancer drugs by decreasing accumulation of drug in cells, and by mediating ATP- and GSH-dependent drug export. Hydrolyzes ATP with low efficiency. Catalyzes the export of sphingosine 1-phosphate from mast cells independently of their degranulation. Participates in inflammatory response by allowing export of leukotriene C4 from leukotriene C4-synthesizing cells. Mediates ATP-dependent, GSH-independent cyclic GMP-AMP (cGAMP) export. Thus, by limiting intracellular cGAMP concentrations negatively regulates the cGAS-STING pathway. Exports S-geranylgeranyl-glutathione (GGG) in lymphoid cells and stromal compartments of lymphoid organs. ABCC1 (via extracellular transport) with GGT5 (via GGG catabolism) establish GGG gradients within lymphoid tissues to position P2RY8-positive lymphocytes at germinal centers in lymphoid follicles and restrict their chemotactic transmigration from blood vessels to the bone marrow parenchyma. Mediates basolateral export of GSH-conjugated R- and S-prostaglandin A2 diastereomers in polarized epithelial cells. This chain is Multidrug resistance-associated protein 1, found in Macaca fascicularis (Crab-eating macaque).